The chain runs to 230 residues: D-glycero-alpha-D-manno-heptose 1-phosphate guanylyltransferase (230 aa).

It belongs to the D-alpha-D-heptose-1-P guanylyltransferase family.

It catalyses the reaction D-glycero-alpha-D-manno-heptose 1-phosphate + GTP + H(+) = GDP-D-glycero-alpha-D-manno-heptose + diphosphate. Its pathway is nucleotide-sugar biosynthesis; GDP-D-glycero-alpha-D-manno-heptose biosynthesis; GDP-D-glycero-alpha-D-manno-heptose from D-glycero-alpha-D-manno-heptose 7-phosphate: step 3/3. It functions in the pathway cell surface structure biogenesis; S-layer biogenesis. In terms of biological role, catalyzes the GDP transfer from GTP to D-glycero-alpha-D-manno-heptose 1-phosphate, yielding GDP-D-alpha-D-heptose. Cannot use ATP, CTP, dTTP or UTP as substrate. The protein is D-glycero-alpha-D-manno-heptose 1-phosphate guanylyltransferase (hddC) of Aneurinibacillus thermoaerophilus.